Consider the following 84-residue polypeptide: Large ribosomal subunit protein bL27 (84 aa).

The interval 1 to 20 (MAHKKAGGSTRNGRDSHSKR) is disordered.

This sequence belongs to the bacterial ribosomal protein bL27 family.

This chain is Large ribosomal subunit protein bL27, found in Blochmanniella pennsylvanica (strain BPEN).